Consider the following 207-residue polypeptide: Small ribosomal subunit protein uS4 (207 aa).

Positions 29–38 (QDKAKFDSKP) are enriched in basic and acidic residues. The disordered stretch occupies residues 29–54 (QDKAKFDSKPGQHGRTSGQRTSDYGL). A compositionally biased stretch (polar residues) spans 42-52 (GRTSGQRTSDY). Residues 97-160 (SRLDNVVYRM…KKQTRIAEAL (64 aa)) enclose the S4 RNA-binding domain.

Belongs to the universal ribosomal protein uS4 family. Part of the 30S ribosomal subunit. Contacts protein S5. The interaction surface between S4 and S5 is involved in control of translational fidelity.

Its function is as follows. One of the primary rRNA binding proteins, it binds directly to 16S rRNA where it nucleates assembly of the body of the 30S subunit. In terms of biological role, with S5 and S12 plays an important role in translational accuracy. The sequence is that of Small ribosomal subunit protein uS4 from Variovorax paradoxus (strain S110).